We begin with the raw amino-acid sequence, 64 residues long: Large ribosomal subunit protein bL35 (64 aa).

2 disordered regions span residues M1–G20 and P37–G64.

This sequence belongs to the bacterial ribosomal protein bL35 family.

The chain is Large ribosomal subunit protein bL35 from Mycobacterium sp. (strain JLS).